Here is a 173-residue protein sequence, read N- to C-terminus: MDIAIQHPWFKRALGPFYPSRLFDQFFGEGLFEYDLLPFLSSTISPYYRQSLFRTVLDSGISEVRSDRDKFVIFLDVKHFSPEDLTVKVQEDFVEIHGKHNERQDDHGYISREFHRRYRLPSNVDQTALSCSVSADGMLTFSGPKIPSGMDAGHSERAIPVSREEKPGSAPSS.

Position 1 is an N-acetylmethionine (M1). The interval 1–63 is required for complex formation with BFSP1 and BFSP2; sequence MDIAIQHPWF…RTVLDSGISE (63 aa). Q6 is subject to Deamidated glutamine; partial. S45 carries the phosphoserine modification. Q50 carries the post-translational modification Deamidated glutamine; partial. Positions 52 to 162 constitute a sHSP domain; that stretch reads LFRTVLDSGI…GHSERAIPVS (111 aa). K70 is subject to N6-acetyllysine. At Q90 the chain carries Deamidated glutamine; partial. At K99 the chain carries N6-acetyllysine. H100 contributes to the Zn(2+) binding site. At N101 the chain carries Deamidated asparagine; partial. Zn(2+) contacts are provided by E102 and H107. S122 bears the Phosphoserine mark. N123 is subject to Deamidated asparagine; partial. A disordered region spans residues 144-173; it reads PKIPSGMDAGHSERAIPVSREEKPGSAPSS. The span at 153 to 167 shows a compositional bias: basic and acidic residues; the sequence is GHSERAIPVSREEKP. H154 contacts Zn(2+). Residue S162 is glycosylated (O-linked (GlcNAc) serine).

The protein belongs to the small heat shock protein (HSP20) family. In terms of assembly, heteromer composed of three CRYAA and one CRYAB subunits. Inter-subunit bridging via zinc ions enhances stability, which is crucial as there is no protein turn over in the lens. Can also form homodimers and homotetramers (dimers of dimers) which serve as the building blocks of homooligomers. Within homooligomers, the zinc-binding motif is created from residues of 3 different molecules. His-100 and Glu-102 from one molecule are ligands of the zinc ion, and His-107 and His-154 residues from additional molecules complete the site with tetrahedral coordination geometry. Part of a complex required for lens intermediate filament formation composed of BFSP1, BFSP2 and CRYAA. Acetylation at Lys-70 may increase chaperone activity. Post-translationally, undergoes age-dependent proteolytical cleavage at the C-terminus.

The protein localises to the cytoplasm. It is found in the nucleus. Contributes to the transparency and refractive index of the lens. Acts as a chaperone, preventing aggregation of various proteins under a wide range of stress conditions. Required for the correct formation of lens intermediate filaments as part of a complex composed of BFSP1, BFSP2 and CRYAA. The chain is Alpha-crystallin A chain (CRYAA) from Equus caballus (Horse).